The chain runs to 337 residues: HTH-type transcriptional repressor PurR (337 aa).

Residues 2 to 56 (ATIKDVAKLAAVSTTTVSHVINKTRFVAEATQKRVWEAVEELNYAPSAVARSLKC) enclose the HTH lacI-type domain. Positions 4 to 23 (IKDVAKLAAVSTTTVSHVIN) form a DNA-binding region, H-T-H motif. The DNA-binding element occupies 48 to 56 (SAVARSLKC). Hypoxanthine contacts are provided by F73, K189, T191, F220, and D276.

Homodimer.

Its pathway is purine metabolism; purine nucleotide biosynthesis [regulation]. In terms of biological role, is the main repressor of the genes involved in the de novo synthesis of purine nucleotides, regulating purB, purC, purEK, purF, purHD, purL, purMN and guaBA expression. PurR is allosterically activated to bind its cognate DNA by binding the purine corepressors, hypoxanthine or guanine, thereby effecting transcription repression. This chain is HTH-type transcriptional repressor PurR, found in Aliivibrio fischeri (strain MJ11) (Vibrio fischeri).